Consider the following 132-residue polypeptide: Small ribosomal subunit protein uS8 (132 aa).

Belongs to the universal ribosomal protein uS8 family. As to quaternary structure, part of the 30S ribosomal subunit. Contacts proteins S5 and S12.

Its function is as follows. One of the primary rRNA binding proteins, it binds directly to 16S rRNA central domain where it helps coordinate assembly of the platform of the 30S subunit. The protein is Small ribosomal subunit protein uS8 of Geotalea uraniireducens (strain Rf4) (Geobacter uraniireducens).